Consider the following 283-residue polypeptide: N-terminal Xaa-Pro-Lys N-methyltransferase 2 (283 aa).

Residues Gly-124, Arg-129, Asp-146, 174-175 (LQ), Gln-190, and His-195 contribute to the S-adenosyl-L-methionine site.

This sequence belongs to the methyltransferase superfamily. NTM1 family.

It localises to the nucleus. The catalysed reaction is N-terminal L-alanyl-L-prolyl-L-lysyl-[protein] + S-adenosyl-L-methionine = N-terminal N-methyl-L-alanyl-L-prolyl-L-lysyl-[protein] + S-adenosyl-L-homocysteine + H(+). It catalyses the reaction N-terminal L-prolyl-L-prolyl-L-lysyl-[protein] + S-adenosyl-L-methionine = N-terminal N-methyl-L-prolyl-L-prolyl-L-lysyl-[protein] + S-adenosyl-L-homocysteine + H(+). The enzyme catalyses N-terminal L-seryl-L-prolyl-L-lysyl-[protein] + S-adenosyl-L-methionine = N-terminal N-methyl-L-seryl-L-prolyl-L-lysyl-[protein] + S-adenosyl-L-homocysteine + H(+). Its function is as follows. Alpha N-methyltransferase that methylates the N-terminus of target proteins containing the N-terminal motif [Ala/Pro/Ser]-Pro-Lys when the initiator Met is cleaved. Specifically catalyzes monomethylation of exposed alpha-amino group of Ala or Ser residue in the [Ala/Ser]-Pro-Lys motif and Pro in the Pro-Pro-Lys motif. Predominantly functions as a mono-methyltransferase but is also able to di-/tri-methylate the GPKRIA peptide and di-methylate the PPKRIA peptide (in vitro). May activate NTMT1 by priming its substrates for trimethylation. This chain is N-terminal Xaa-Pro-Lys N-methyltransferase 2, found in Homo sapiens (Human).